We begin with the raw amino-acid sequence, 60 residues long: Probable tautomerase SP_1017 (60 aa).

Residue proline 2 is the Proton acceptor; via imino nitrogen of the active site.

It belongs to the 4-oxalocrotonate tautomerase family.

The protein is Probable tautomerase SP_1017 of Streptococcus pneumoniae serotype 4 (strain ATCC BAA-334 / TIGR4).